A 589-amino-acid polypeptide reads, in one-letter code: Acyl-CoA ligase SID4 (589 aa).

A PTS2-type peroxisomal targeting signal motif is present at residues 12-20 (RLQQTLNHI). Residues 228-236 (TSGSTGNPK), 367-372 (SSYGLT), Asp458, and Arg473 contribute to the ATP site. A substrate-binding site is contributed by Thr372. CoA is bound by residues 481-483 (GGE), Lys547, and 555-557 (FGL). Lys572 lines the ATP pocket.

The protein belongs to the ATP-dependent AMP-binding enzyme family.

It localises to the peroxisome. The protein operates within siderophore biosynthesis. In terms of biological role, acyl-CoA ligase; part of the gene cluster that mediates the biosynthesis of hydroxamate-containing siderophores that play a critical role in virulence via intracellular iron acquisition during macrophage infection. The protein is Acyl-CoA ligase SID4 of Ajellomyces capsulatus (Darling's disease fungus).